The chain runs to 264 residues: MIRYNNNKKTIEGDRMFYTYLRGLVVLLLWSINGNAHYHNTDKIPNQDENYILVAPHRTWWDPVYMAFATKPKQFIFMAKKELFTNRIFGWWIRMCGAFPIDRENPSASAIKYPINVLKKSDRSLIMFPSGSRHSNDVKGGAALIAKMAKVRIMPVTYTGPMTLKGLISRERVDMNFGNPIDISDIKKMNDEGIETVANRIQTEFQRLDEETKQWHNDKKPNPLWWFIRIPALILAIILAILTIIFSFIASFIWNPDKKREELA.

Residues 16–36 traverse the membrane as a helical segment; sequence MFYTYLRGLVVLLLWSINGNA. An HXXXXD motif motif is present at residues 57–62; sequence HRTWWD. A helical membrane pass occupies residues 233-253; the sequence is LILAIILAILTIIFSFIASFI.

This sequence belongs to the 1-acyl-sn-glycerol-3-phosphate acyltransferase family.

It is found in the membrane. It carries out the reaction a fatty acyl-[ACP] + a 1-acyl-sn-glycero-3-phosphate = a 1,2-diacyl-sn-glycero-3-phosphate + holo-[ACP]. It catalyses the reaction hexadecanoyl-[ACP] + 1-hexadecanoyl-sn-glycero-3-phosphate = 1,2-dihexadecanoyl-sn-glycero-3-phosphate + holo-[ACP]. The protein operates within lipid metabolism; phospholipid metabolism. In terms of biological role, converts lysophosphatidic acid (LPA) into phosphatidic acid (PA) by incorporating an acyl moiety at the 2 position. This enzyme utilizes acyl-ACP as fatty acyl donor, but not acyl-CoA. This Streptococcus pneumoniae (strain ATCC BAA-255 / R6) protein is 1-acyl-sn-glycerol-3-phosphate acyltransferase (plsC).